The primary structure comprises 541 residues: Peptidyl-alpha-hydroxyglycine alpha-amidating lyase 1 (541 aa).

Positions 1-33 (MKSTDSAKCLGSKSLAICCLLLHLLLCIRPAVS) are cleaved as a signal peptide. Over 34 to 458 (QTQSPQRYLH…VAVHHPSGKA (425 aa)) the chain is Extracellular. N-linked (GlcNAc...) asparagine glycosylation occurs at N92. NHL repeat units follow at residues 164–205 (GKVQ…FPPR), 215–258 (LGDA…YSRK), and 272–314 (GISY…FLSS). Disulfide bonds link C228/C248 and C299/C310. N315 is a glycosylation site (N-linked (GlcNAc...) asparagine). An NHL 4 repeat occupies 374–418 (KQLVSKFGPNNLQFQNPHDVAVTADGNEIYVAELNPMRIHKFVHR). The chain crosses the membrane as a helical span at residues 459 to 479 (ILVASLMLLFAGSTFALALIF). Topologically, residues 480–541 (ARRRKRGCLP…TKTLASAQYA (62 aa)) are cytoplasmic. The interval 521-541 (LDQQASDEEQETKTLASAQYA) is disordered.

The protein belongs to the peptidyl-alpha-hydroxyglycine alpha-amidating lyase family. Zn(2+) is required as a cofactor. Post-translationally, N-glycosylated. As to expression, widely expressed. In mature larvae, it is ubiquitously expressed with a low expression in all cells and a stronger expression in a subset of neurons. Colocalizes with neuropeptide proctolin. In adults, weak expression is observed in most neuronal cell bodies and in scattered large cells throughout the protocerebrum and also in the subesophageal neuromeres (at protein level).

Its subcellular location is the cell membrane. The catalysed reaction is a [peptide]-C-terminal (2S)-2-hydroxyglycine = a [peptide]-C-terminal amide + glyoxylate. Functionally, peptidyl-alpha-hydroxylglycine alpha-amidating lyase that catalyzes an essential reaction in C-terminal alpha-amidation of peptides. Mediates the dismutation of the unstable peptidyl(2-hydroxyglycine) intermediate to glyoxylate and the corresponding desglycine peptide amide. C-terminal amidation of peptides such as neuropeptides is essential for full biological activity. The sequence is that of Peptidyl-alpha-hydroxyglycine alpha-amidating lyase 1 (Pal1) from Drosophila melanogaster (Fruit fly).